The chain runs to 188 residues: NADH-quinone oxidoreductase subunit I 2 (188 aa).

4Fe-4S ferredoxin-type domains lie at 56–88 (HFLK…VVPY) and 98–127 (AKFE…LGQQ). Residues C68, C71, C74, C78, C107, C110, C113, and C117 each coordinate [4Fe-4S] cluster.

It belongs to the complex I 23 kDa subunit family. As to quaternary structure, NDH-1 is composed of 14 different subunits. Subunits NuoA, H, J, K, L, M, N constitute the membrane sector of the complex. It depends on [4Fe-4S] cluster as a cofactor.

It is found in the cell inner membrane. It carries out the reaction a quinone + NADH + 5 H(+)(in) = a quinol + NAD(+) + 4 H(+)(out). In terms of biological role, NDH-1 shuttles electrons from NADH, via FMN and iron-sulfur (Fe-S) centers, to quinones in the respiratory chain. The immediate electron acceptor for the enzyme in this species is believed to be ubiquinone. Couples the redox reaction to proton translocation (for every two electrons transferred, four hydrogen ions are translocated across the cytoplasmic membrane), and thus conserves the redox energy in a proton gradient. This is NADH-quinone oxidoreductase subunit I 2 from Rhizobium etli (strain ATCC 51251 / DSM 11541 / JCM 21823 / NBRC 15573 / CFN 42).